Consider the following 354-residue polypeptide: Uroporphyrinogen decarboxylase (354 aa).

Residues 27–31 (RQAGR), Asp-77, Tyr-154, Ser-209, and His-327 each bind substrate.

The protein belongs to the uroporphyrinogen decarboxylase family. In terms of assembly, homodimer.

The protein localises to the cytoplasm. It catalyses the reaction uroporphyrinogen III + 4 H(+) = coproporphyrinogen III + 4 CO2. The protein operates within porphyrin-containing compound metabolism; protoporphyrin-IX biosynthesis; coproporphyrinogen-III from 5-aminolevulinate: step 4/4. Functionally, catalyzes the decarboxylation of four acetate groups of uroporphyrinogen-III to yield coproporphyrinogen-III. In Pseudoalteromonas translucida (strain TAC 125), this protein is Uroporphyrinogen decarboxylase.